Here is a 198-residue protein sequence, read N- to C-terminus: Putative Do-like 15 protein (198 aa).

The tract at residues 48–198 (KIFSFSREPN…VFENDSPSDK (151 aa)) is serine protease. Catalysis depends on charge relay system residues H86 and S175.

The protein belongs to the peptidase S1B family.

This chain is Putative Do-like 15 protein (DEGP15), found in Arabidopsis thaliana (Mouse-ear cress).